Here is a 256-residue protein sequence, read N- to C-terminus: MGRGRVQLKRIENKINRQVTFSKRRAGLLKKAHEISVLCDAEVALVVFSHKGKLFEYSTDSCMEKILERYERYSYAERQLIAPESDVNTNWSMEYNRLKAKIELLERNQRHYLGEDLQAMSPKELQNLEQQLDTALKHIRTRKNQLMYESINELQKKEKAIQEQNSMLSKQIKEREKILRAQQEQWDQQNQGHNMPPPLPPQQHQIQHPYMLSHQPSPFLNMGGLYQEDDPMAMRRNDLELTLEPVYNCNLGCFAA.

One can recognise an MADS-box domain in the interval 1 to 61 (MGRGRVQLKR…GKLFEYSTDS (61 aa)). Positions 88-178 (NTNWSMEYNR…SKQIKEREKI (91 aa)) constitute a K-box domain. Residues 88-185 (NTNWSMEYNR…EKILRAQQEQ (98 aa)) adopt a coiled-coil conformation.

As to quaternary structure, homodimer capable of binding to CArG-box sequences. Heterodimer with SEP3, AP1 and SVP. Binds AP3/PI to form a ternary complex. Interacts with the SEU-LUG corepressor complex when complexed to AGL24 or SVP. Interacts with AGL15 and AGL16. Interacts with TT16/AGL32. Expressed in young flower primordia, later becomes localized to sepals and petals.

Its subcellular location is the nucleus. Functionally, transcription factor that promotes early floral meristem identity in synergy with LEAFY. Is required subsequently for the transition of an inflorescence meristem into a floral meristem. Is indispensable for normal development of sepals and petals in flowers. Positively regulates the B class homeotic proteins APETALA3 and PISTILLATA with the cooperation of LEAFY and UFO. Interacts with SEPALLATA3 or AP3/PI heterodimer to form complexes that could be involved in genes regulation during floral meristem development. Positively regulates AGAMOUS in cooperation with LEAFY. Displays a redundant function with CAULIFLOWER in the up-regulation of LEAFY. Together with AGL24 and SVP, controls the identity of the floral meristem and regulates expression of class B, C and E genes. Represses flowering time genes AGL24, SVP and SOC1 in emerging floral meristems. The polypeptide is Floral homeotic protein APETALA 1 (AP1) (Arabidopsis thaliana (Mouse-ear cress)).